A 159-amino-acid chain; its full sequence is 6,7-dimethyl-8-ribityllumazine synthase (159 aa).

5-amino-6-(D-ribitylamino)uracil contacts are provided by residues W26, 57 to 59, and 79 to 81; these read ALE and CVI. 84 to 85 provides a ligand contact to (2S)-2-hydroxy-3-oxobutyl phosphate; the sequence is GT. The active-site Proton donor is the H87. Position 112 (N112) interacts with 5-amino-6-(D-ribitylamino)uracil. R126 is a binding site for (2S)-2-hydroxy-3-oxobutyl phosphate.

Belongs to the DMRL synthase family.

It carries out the reaction (2S)-2-hydroxy-3-oxobutyl phosphate + 5-amino-6-(D-ribitylamino)uracil = 6,7-dimethyl-8-(1-D-ribityl)lumazine + phosphate + 2 H2O + H(+). It participates in cofactor biosynthesis; riboflavin biosynthesis; riboflavin from 2-hydroxy-3-oxobutyl phosphate and 5-amino-6-(D-ribitylamino)uracil: step 1/2. Catalyzes the formation of 6,7-dimethyl-8-ribityllumazine by condensation of 5-amino-6-(D-ribitylamino)uracil with 3,4-dihydroxy-2-butanone 4-phosphate. This is the penultimate step in the biosynthesis of riboflavin. The chain is 6,7-dimethyl-8-ribityllumazine synthase from Corynebacterium efficiens (strain DSM 44549 / YS-314 / AJ 12310 / JCM 11189 / NBRC 100395).